Here is a 682-residue protein sequence, read N- to C-terminus: Heat shock 70 kDa protein, mitochondrial (682 aa).

Residues 1–57 (MATAALLRSLRRREFATSSISAYRTLASNTKPSWCPSLVGAKWAGLARPFSSKPAGN) constitute a mitochondrion transit peptide. A disordered region spans residues 649–682 (GEHMAGGSSGGASGGGGAQGGDQPPEAEYEEVKK). The segment covering 655–668 (GSSGGASGGGGAQG) has biased composition (gly residues). The segment covering 673 to 682 (PEAEYEEVKK) has biased composition (acidic residues).

This sequence belongs to the heat shock protein 70 family.

It is found in the mitochondrion. This chain is Heat shock 70 kDa protein, mitochondrial (HSP68), found in Solanum tuberosum (Potato).